The chain runs to 373 residues: Chaperone protein DnaJ (373 aa).

The J domain occupies 5 to 71; that stretch reads DYYEILGVSR…EKRAMYDKFG (67 aa). Residues 144-226 form a CR-type zinc finger; that stretch reads GVKIPLEYDR…CGGTGRIRKR (83 aa). Zn(2+) contacts are provided by Cys157, Cys160, Cys174, Cys177, Cys200, Cys203, Cys214, and Cys217. 4 CXXCXGXG motif repeats span residues 157–164, 174–181, 200–207, and 214–221; these read CEHCHGEG, CPKCHGTG, CNQCGGTG, and CRVCGGTG.

It belongs to the DnaJ family. As to quaternary structure, homodimer. Zn(2+) serves as cofactor.

Its subcellular location is the cytoplasm. In terms of biological role, participates actively in the response to hyperosmotic and heat shock by preventing the aggregation of stress-denatured proteins and by disaggregating proteins, also in an autonomous, DnaK-independent fashion. Unfolded proteins bind initially to DnaJ; upon interaction with the DnaJ-bound protein, DnaK hydrolyzes its bound ATP, resulting in the formation of a stable complex. GrpE releases ADP from DnaK; ATP binding to DnaK triggers the release of the substrate protein, thus completing the reaction cycle. Several rounds of ATP-dependent interactions between DnaJ, DnaK and GrpE are required for fully efficient folding. Also involved, together with DnaK and GrpE, in the DNA replication of plasmids through activation of initiation proteins. This is Chaperone protein DnaJ from Thermosipho melanesiensis (strain DSM 12029 / CIP 104789 / BI429).